The primary structure comprises 185 residues: Elongation factor P (185 aa).

Belongs to the elongation factor P family.

The protein resides in the cytoplasm. The protein operates within protein biosynthesis; polypeptide chain elongation. Functionally, involved in peptide bond synthesis. Stimulates efficient translation and peptide-bond synthesis on native or reconstituted 70S ribosomes in vitro. Probably functions indirectly by altering the affinity of the ribosome for aminoacyl-tRNA, thus increasing their reactivity as acceptors for peptidyl transferase. The polypeptide is Elongation factor P (Salinispora arenicola (strain CNS-205)).